The primary structure comprises 570 residues: MRVLGLNGWPRDFHDASAALLVDGRIAAFAEEERFTRKKHGYNTAPVQAAAFCLAQAGLTVDDLDAVAFGWDLPAMYRERLGGWPHSDSEALDILLPRDVFPRRTDPPLHFVQHHLAHAASAYYFSGEDRGAVLIVDGQGEEECVTLAHAEGGKITVLDTVPGAWSLGFFYEHVSEYTGLGGDNPGKLMGLAAHGTTVDETLSAFAFDSDGYRLNLIDPQARDPEDWDEYSVTERAWFAHLERIYRLPPNEFVRRYDPAKGRVVRDTRRDPYEYRDLAATAQAALERAVFGLADSVLARTGERTLFVAGGVGLNATMNGKLLTRSTVDKMFVPPVASDIGVSLGAAAAVAVELGDRIAPMGDTAAWGPEFSPDQVRAALDRTGLAYREPANLEREVAALIASGKVVGWAQGRGEVGPRALGQRSLLGSAHSPTMRDHINLRVKDREWWRPFAPSMLRSVSDQVLEVDADFPYMIMTTKVRAAYAERLPSVVHEDWSTRPQTVTEASNPRYHRMLTELGDLVGDPVCLNTSFNDRGEPIVSSPADALLTFSRLPIDALAVGPYLVTKDLRH.

The segment at 1–354 (MRVLGLNGWP…AAAAVAVELG (354 aa)) is kae1-like. D12 is a tobramycin binding site. The active-site Proton acceptor is the H14. K39 lines the ATP pocket. Fe cation-binding residues include H114, H118, and D137. Residues Q139, G168, and E172 each contribute to the carbamoyl adenylate site. The tobramycin site is built by E172 and D228. Carbamoyl adenylate-binding residues include G310 and N314. D338 provides a ligand contact to Fe cation. A yrdC-like region spans residues 367-570 (GPEFSPDQVR…PYLVTKDLRH (204 aa)). Residues R418 and R449 each contribute to the ATP site. 418-419 (RA) contributes to the carbamoyl phosphate binding site. Carbamoyl phosphate is bound by residues R498 and 528 to 530 (NTS).

This sequence belongs to the NodU/CmcH family. The cofactor is Fe(2+).

It carries out the reaction tobramycin + carbamoyl phosphate + ATP + H2O = nebramycin 5' + AMP + phosphate + diphosphate + H(+). The enzyme catalyses kanamycin A + carbamoyl phosphate + ATP + H2O = 6''-O-carbamoylkanamycin A + AMP + phosphate + diphosphate + H(+). The catalysed reaction is carbamoyl phosphate + ATP + H2O = carbamoyl adenylate + phosphate + diphosphate. It catalyses the reaction tobramycin + carbamoyl adenylate = nebramycin 5' + AMP + H(+). It carries out the reaction carbamoyl adenylate + kanamycin A = 6''-O-carbamoylkanamycin A + AMP + H(+). It functions in the pathway antibiotic biosynthesis; kanamycin biosynthesis. It participates in antibiotic biosynthesis; tobramycin biosynthesis. ADP inhibits the formation of nebramycin 5'. TobZ is involved in the biosynthesis of the 2-deoxystreptamine-containing aminoglycoside antibiotics such as nebramycin 5 and 6-O-carbamoylkanamycin. Catalyzes the hydrolysis of carbamoyl phosphate and its subsequent adenylation by ATP to yield O-carbamoyladenylate. Then it catalyzes the transfer of the carbamoyl moiety from O-carbamoyladenylate to the tobramycin 6-hydroxy group to yield nebramycin 5'. It catalyzes the same reaction with kanamycin A. These reactions are considerably slower in the presence of deoxy-ATP. This Streptoalloteichus tenebrarius (strain ATCC 17920 / DSM 40477 / JCM 4838 / CBS 697.72 / NBRC 16177 / NCIMB 11028 / NRRL B-12390 / A12253. 1 / ISP 5477) (Streptomyces tenebrarius) protein is nebramycin 5' synthase (tobZ).